The following is a 181-amino-acid chain: NADH-quinone oxidoreductase subunit B (181 aa).

Residues C45, C46, C111, and C140 each contribute to the [4Fe-4S] cluster site.

Belongs to the complex I 20 kDa subunit family. In terms of assembly, NDH-1 is composed of 15 different subunits. Subunits NuoB, C, D, E, F, and G constitute the peripheral sector of the complex. The cofactor is [4Fe-4S] cluster.

The protein localises to the cell membrane. The enzyme catalyses a quinone + NADH + 5 H(+)(in) = a quinol + NAD(+) + 4 H(+)(out). NDH-1 shuttles electrons from NADH, via FMN and iron-sulfur (Fe-S) centers, to quinones in the respiratory chain. The immediate electron acceptor for the enzyme in this species is believed to be a menaquinone. Couples the redox reaction to proton translocation (for every two electrons transferred, four hydrogen ions are translocated across the cytoplasmic membrane), and thus conserves the redox energy in a proton gradient. The polypeptide is NADH-quinone oxidoreductase subunit B (Deinococcus radiodurans (strain ATCC 13939 / DSM 20539 / JCM 16871 / CCUG 27074 / LMG 4051 / NBRC 15346 / NCIMB 9279 / VKM B-1422 / R1)).